Here is an 853-residue protein sequence, read N- to C-terminus: Trimethylguanosine synthase (853 aa).

Positions 54–84 (NNAGDQGTEEEEDGHSNGTAESHSPNESDLD) are disordered. Position 61 is a phosphothreonine (Thr-61). A compositionally biased stretch (polar residues) spans 69-80 (SNGTAESHSPNE). Phosphoserine occurs at positions 81, 85, 92, and 139. Tyr-144 is subject to Phosphotyrosine. Ser-152 carries the phosphoserine modification. 2 disordered regions span residues 328 to 437 (VEQS…DDNG) and 523 to 549 (ETSQDSLSQNKMQDTCTSSDSEEQDMS). Basic and acidic residues predominate over residues 365–383 (KENDISENRSSDQPAKELQ). Residues Ser-405 and Ser-431 each carry the phosphoserine modification. A compositionally biased stretch (acidic residues) spans 424–435 (DVDENPDSEVDD). Positions 526–541 (QDSLSQNKMQDTCTSS) are enriched in polar residues. A Phosphoserine modification is found at Ser-572. The disordered stretch occupies residues 594–623 (CSTEEIPNSPHAETEVEIKKKKKKNKNKKI). Residues 612-621 (KKKKKKNKNK) show a composition bias toward basic residues. An S-adenosyl-L-methionine-binding site is contributed by Asp-711.

The protein belongs to the methyltransferase superfamily. Trimethylguanosine synthase family. In terms of assembly, may form homooligomers. Interacts with CREBBP/CBP, EED/WAIT1, EP300/P300, NCOA6/PRIP, PPARBP/PBP and SMN. As to expression, ubiquitously expressed.

It is found in the cytoplasm. The protein localises to the nucleus. It localises to the cajal body. The protein resides in the nucleolus. The catalysed reaction is a 5'-end (N(7)-methyl 5'-triphosphoguanosine)-ribonucleoside in snRNA + S-adenosyl-L-methionine = a 5'-end (N(2),N(7)-dimethyl 5'-triphosphoguanosine)-ribonucleoside in snRNA + S-adenosyl-L-homocysteine + H(+). It catalyses the reaction a 5'-end (N(7)-methyl 5'-triphosphoguanosine)-ribonucleoside in snoRNA + S-adenosyl-L-methionine = a 5'-end (N(2),N(7)-dimethyl 5'-triphosphoguanosine)-ribonucleoside in snoRNA + S-adenosyl-L-homocysteine + H(+). It carries out the reaction a 5'-end (N(2),N(7)-dimethyl 5'-triphosphoguanosine)-ribonucleoside in snRNA + S-adenosyl-L-methionine = a 5'-end (N(2),N(2),N(7)-trimethyl 5'-triphosphoguanosine)-ribonucleoside in snRNA + S-adenosyl-L-homocysteine + H(+). The enzyme catalyses a 5'-end (N(2),N(7)-dimethyl 5'-triphosphoguanosine)-ribonucleoside in snoRNA + S-adenosyl-L-methionine = a 5'-end (N(2),N(2),N(7)-trimethyl 5'-triphosphoguanosine)-ribonucleoside in snoRNA + S-adenosyl-L-homocysteine + H(+). In terms of biological role, catalyzes the 2 serial methylation steps for the conversion of the 7-monomethylguanosine (m(7)G) caps of snRNAs and snoRNAs to a 2,2,7-trimethylguanosine (m(2,2,7)G) cap structure. The enzyme is specific for guanine, and N7 methylation must precede N2 methylation. Hypermethylation of the m7G cap of U snRNAs leads to their concentration in nuclear foci, their colocalization with coilin and the formation of canonical Cajal bodies (CBs). Plays a role in transcriptional regulation. This is Trimethylguanosine synthase (Tgs1) from Mus musculus (Mouse).